Here is a 278-residue protein sequence, read N- to C-terminus: Transmembrane protein 41A-B (278 aa).

Positions 1–23 (MRSIWGLIVLVAAATFYLYLLSA) are cleaved as a signal peptide. 5 helical membrane passes run 78-98 (GYVF…AIPG), 101-121 (FLNM…IACT), 164-184 (LFFF…FLNV), 191-211 (IPIP…NFIC), and 230-250 (WFTL…GALI).

This sequence belongs to the TMEM41 family.

It is found in the membrane. The protein is Transmembrane protein 41A-B of Danio rerio (Zebrafish).